The primary structure comprises 672 residues: Spermatid perinuclear RNA-binding protein (672 aa).

The DZF domain maps to 5-363; the sequence is RSFANDDRHV…ALKRPFEDGL (359 aa). The segment at 349–371 is disordered; that stretch reads GAGSSALKRPFEDGLGDDKDPNK. Positions 357–371 are enriched in basic and acidic residues; sequence RPFEDGLGDDKDPNK. Residues 387 to 453 enclose the DRBM 1 domain; it reads DLMNALMRLN…AVKVLQAMGY (67 aa). Over residues 467 to 476 the composition is skewed to basic and acidic residues; the sequence is DEKSDNESKN. Residues 467–514 form a disordered region; it reads DEKSDNESKNDTVSSNSSNNTGNSTTETSSTLEVRTQGPILTASGKNP. Over residues 477–497 the composition is skewed to low complexity; it reads DTVSSNSSNNTGNSTTETSST. The DRBM 2 domain occupies 510 to 576; the sequence is SGKNPVMELN…ALAALEKLFS (67 aa). Asymmetric dimethylarginine occurs at positions 612 and 617.

As to quaternary structure, interacts with EIF2AK2. Associates with microtubules; it is unsure whether such interaction is direct or indirect. Isoform 2 is expressed in spermatocytes (at protein level). Expressed in testis, thymus, ovary, liver, kidney, heart, spleen and brain. Expressed in cortex, dentate gyrus and Purkinje cell layer and granule cells of the cerebellum.

It is found in the cytoplasm. The protein resides in the cytoskeleton. Its function is as follows. Involved in spermatogenesis and sperm function. Plays a role in regulation of cell growth. Binds to double-stranded DNA and RNA. Binds most efficiently to poly(I:C) RNA than to poly(dI:dC) DNA. Also binds to single-stranded poly(G) RNA. Binds non-specifically to the mRNA PRM1 3'-UTR and adenovirus VA RNA. This Mus musculus (Mouse) protein is Spermatid perinuclear RNA-binding protein (Strbp).